A 417-amino-acid chain; its full sequence is Gamma-glutamyl phosphate reductase (417 aa).

It belongs to the gamma-glutamyl phosphate reductase family.

Its subcellular location is the cytoplasm. It catalyses the reaction L-glutamate 5-semialdehyde + phosphate + NADP(+) = L-glutamyl 5-phosphate + NADPH + H(+). Its pathway is amino-acid biosynthesis; L-proline biosynthesis; L-glutamate 5-semialdehyde from L-glutamate: step 2/2. Functionally, catalyzes the NADPH-dependent reduction of L-glutamate 5-phosphate into L-glutamate 5-semialdehyde and phosphate. The product spontaneously undergoes cyclization to form 1-pyrroline-5-carboxylate. This chain is Gamma-glutamyl phosphate reductase, found in Escherichia coli O6:K15:H31 (strain 536 / UPEC).